The chain runs to 358 residues: DNA integrity scanning protein DisA (358 aa).

Residues 9–147 form the DAC domain; that stretch reads KQDLSEILQF…ENMKYILKDI (139 aa). Residues Gly76, Leu94, and 107–111 contribute to the ATP site; that span reads MRHRT.

Belongs to the DisA family. Homooctamer. Mg(2+) serves as cofactor.

It catalyses the reaction 2 ATP = 3',3'-c-di-AMP + 2 diphosphate. Functionally, participates in a DNA-damage check-point that is active prior to asymmetric division when DNA is damaged. DisA forms globular foci that rapidly scan along the chromosomes during sporulation, searching for lesions. When a lesion is present, DisA pauses at the lesion site. This triggers a cellular response that culminates in a temporary block in sporulation initiation. Its function is as follows. Also has diadenylate cyclase activity, catalyzing the condensation of 2 ATP molecules into cyclic di-AMP (c-di-AMP). c-di-AMP acts as a signaling molecule that couples DNA integrity with progression of sporulation. The rise in c-di-AMP level generated by DisA while scanning the chromosome, operates as a positive signal that advances sporulation; upon encountering a lesion, the DisA focus arrests at the damaged site and halts c-di-AMP synthesis. The protein is DNA integrity scanning protein DisA of Bacillus licheniformis (strain ATCC 14580 / DSM 13 / JCM 2505 / CCUG 7422 / NBRC 12200 / NCIMB 9375 / NCTC 10341 / NRRL NRS-1264 / Gibson 46).